Consider the following 436-residue polypeptide: 3-ketoacyl-CoA thiolase (436 aa).

C99 serves as the catalytic Acyl-thioester intermediate. Residues H392 and C422 each act as proton acceptor in the active site.

It belongs to the thiolase-like superfamily. Thiolase family. In terms of assembly, heterotetramer of two alpha chains (FadJ) and two beta chains (FadI).

The protein localises to the cytoplasm. The enzyme catalyses an acyl-CoA + acetyl-CoA = a 3-oxoacyl-CoA + CoA. It participates in lipid metabolism; fatty acid beta-oxidation. Catalyzes the final step of fatty acid oxidation in which acetyl-CoA is released and the CoA ester of a fatty acid two carbons shorter is formed. This is 3-ketoacyl-CoA thiolase from Escherichia coli O6:H1 (strain CFT073 / ATCC 700928 / UPEC).